The sequence spans 90 residues: Probable Fe(2+)-trafficking protein (90 aa).

This sequence belongs to the Fe(2+)-trafficking protein family.

Its function is as follows. Could be a mediator in iron transactions between iron acquisition and iron-requiring processes, such as synthesis and/or repair of Fe-S clusters in biosynthetic enzymes. The sequence is that of Probable Fe(2+)-trafficking protein from Pasteurella multocida (strain Pm70).